The sequence spans 413 residues: Histidine--tRNA ligase (413 aa).

It belongs to the class-II aminoacyl-tRNA synthetase family. As to quaternary structure, homodimer.

Its subcellular location is the cytoplasm. The enzyme catalyses tRNA(His) + L-histidine + ATP = L-histidyl-tRNA(His) + AMP + diphosphate + H(+). In Ehrlichia canis (strain Jake), this protein is Histidine--tRNA ligase.